The sequence spans 275 residues: NH(3)-dependent NAD(+) synthetase (275 aa).

46–53 (GISGGQDS) provides a ligand contact to ATP. Asp-52 contacts Mg(2+). Position 140 (Arg-140) interacts with deamido-NAD(+). Position 160 (Thr-160) interacts with ATP. Glu-165 is a binding site for Mg(2+). Deamido-NAD(+) contacts are provided by Lys-173 and Asp-180. ATP contacts are provided by Lys-189 and Thr-211. 260–261 (HK) contacts deamido-NAD(+).

Belongs to the NAD synthetase family. As to quaternary structure, homodimer.

The catalysed reaction is deamido-NAD(+) + NH4(+) + ATP = AMP + diphosphate + NAD(+) + H(+). The protein operates within cofactor biosynthesis; NAD(+) biosynthesis; NAD(+) from deamido-NAD(+) (ammonia route): step 1/1. Catalyzes the ATP-dependent amidation of deamido-NAD to form NAD. Uses ammonia as a nitrogen source. The polypeptide is NH(3)-dependent NAD(+) synthetase (Escherichia coli O17:K52:H18 (strain UMN026 / ExPEC)).